Consider the following 416-residue polypeptide: E3 ubiquitin-protein ligase DMA1 (416 aa).

The interval 1–30 is disordered; it reads MSTNTVPSSPPNQTPPAASGIATSHDHTKF. Residues lysine 150, lysine 204, lysine 217, lysine 237, lysine 240, lysine 260, lysine 300, lysine 306, lysine 313, and lysine 317 each participate in a glycyl lysine isopeptide (Lys-Gly) (interchain with G-Cter in ubiquitin) cross-link. The region spanning 189–252 is the FHA domain; that stretch reads IIIGRYTERV…SGTFLNHQRL (64 aa). Residues 327–371 form an RING-type zinc finger; that stretch reads CSICLNKIKPCQAIFISPCAHSWHFHCVRRLVIMNYPQFMCPNCR.

Belongs to the DMA1 family. Interacts with CDC123. Interacts with PCL1. UBC4-dependent autoubiquitination occurs at Lys-150, Lys-204, Lys-217, Lys-237, Lys-240, Lys-260, Lys-300, Lys-306, Lys-313 and Lys-317. UBC4-dependent autoubiquitination is responsible for DMA2 turnover. UBC13/MMS2-dependent autoubiquitination occurs at Lys-237 and Lys-306. Lys-204 and Lys-306 are also ubiquitinated in trans by DMA2 E3 ligase in association with UBC4.

Its subcellular location is the cytoplasm. It catalyses the reaction S-ubiquitinyl-[E2 ubiquitin-conjugating enzyme]-L-cysteine + [acceptor protein]-L-lysine = [E2 ubiquitin-conjugating enzyme]-L-cysteine + N(6)-ubiquitinyl-[acceptor protein]-L-lysine.. In terms of biological role, E3 ubiquitin-protein ligase which functions in cell cycle retarding in conjunction with the UBC4 and UBC13/MMS2 complex, 2 E2 ubiquitin conjugating enzymes. Involved in nutritional control of the cell cycle. Targets the G1 cyclin PCL1 for destruction. Required for proper spindle positioning, likely regulating septin ring deposition at the bud neck. The sequence is that of E3 ubiquitin-protein ligase DMA1 from Saccharomyces cerevisiae (strain ATCC 204508 / S288c) (Baker's yeast).